We begin with the raw amino-acid sequence, 517 residues long: GMP synthase [glutamine-hydrolyzing] (517 aa).

One can recognise a Glutamine amidotransferase type-1 domain in the interval 9–199 (RILILDFGSQ…VLGVCGCERL (191 aa)). Catalysis depends on Cys-86, which acts as the Nucleophile. Residues His-173 and Glu-175 contribute to the active site. The 193-residue stretch at 200-392 (WTSESIIEDA…LGLPYNMLYR (193 aa)) folds into the GMPS ATP-PPase domain. Position 227–233 (227–233 (SGGVDSS)) interacts with ATP.

Homodimer.

It catalyses the reaction XMP + L-glutamine + ATP + H2O = GMP + L-glutamate + AMP + diphosphate + 2 H(+). Its pathway is purine metabolism; GMP biosynthesis; GMP from XMP (L-Gln route): step 1/1. Functionally, catalyzes the synthesis of GMP from XMP. In Vibrio campbellii (strain ATCC BAA-1116), this protein is GMP synthase [glutamine-hydrolyzing].